The primary structure comprises 1013 residues: A-type ATP synthase subunit A (1013 aa).

The region spanning 392–525 (FLGYVIGDGT…LTYLLAKLGI (134 aa)) is the DOD-type homing endonuclease domain.

This sequence belongs to the ATPase alpha/beta chains family. Has multiple subunits with at least A(3), B(3), C, D, E, F, H, I and proteolipid K(x). This protein undergoes a protein self splicing that involves a post-translational excision of the VDE intervening region (intein) followed by peptide ligation.

The protein resides in the cell membrane. It catalyses the reaction ATP + H2O + 4 H(+)(in) = ADP + phosphate + 5 H(+)(out). Its function is as follows. Component of the A-type ATP synthase that produces ATP from ADP in the presence of a proton gradient across the membrane. The A chain is the catalytic subunit. This Pyrococcus furiosus (strain ATCC 43587 / DSM 3638 / JCM 8422 / Vc1) protein is A-type ATP synthase subunit A.